The sequence spans 426 residues: Probable serine/threonine-protein kinase PBL2 (426 aa).

The tract at residues 1–54 (MGNCLDSSAKVDNSNHSPHANSASSGSKVSSKTSRSTGPSGLSTTSYSTDSSFG) is disordered. The N-myristoyl glycine moiety is linked to residue Gly2. Residue Cys4 is the site of S-palmitoyl cysteine attachment. The span at 14–38 (SNHSPHANSASSGSKVSSKTSRSTG) shows a compositional bias: low complexity. A compositionally biased stretch (polar residues) spans 39–52 (PSGLSTTSYSTDSS). Thr75 carries the phosphothreonine modification. The region spanning 86-369 (FRQDNLLGEG…SEVLVTLEQL (284 aa)) is the Protein kinase domain. ATP is bound by residues 92 to 100 (LGEGGFGCV) and Lys124. A Phosphotyrosine modification is found at Tyr169. Asp219 (proton acceptor) is an active-site residue. Ser253 bears the O-UMP-serine mark. Ser253 is subject to Phosphoserine. Residues Thr254 and Thr259 each carry the phosphothreonine modification. The residue at position 254 (Thr254) is an O-UMP-threonine. At Tyr267 the chain carries Phosphotyrosine. The interval 374–426 (KPGTKHTQMESPRFHHSSVMQKSPVRYSHDRPLLHMTPGASPLPSYTQSPRVR) is disordered. The span at 417–426 (PSYTQSPRVR) shows a compositional bias: polar residues.

It belongs to the protein kinase superfamily. Ser/Thr protein kinase family. As to quaternary structure, interacts with FLS2. Interacts with the Xanthomonas campestris effector XopAC/AvrAC; the recognition of X.campestris effector XopAC/AvrAC requires the presence of RKS1 and RPP13L4/ZAR1. Component of a stable high-order oligomeric complex made of RKS1 and RPP13L4/ZAR1 which recruits X.campestris effector XopAC/AvrAC-mediated uridylylated PBL2 in the presence of ATP to form a wheel-like pentameric resistosome; this complex triggers immunity toward X.campestris in vascular tissues. Binds to RKS1 when uridylylated. Post-translationally, uridylylated at Ser-253 and Thr-254 by Xanthomonas campestris effector AvrAC/XopAC; this uridylylation is necessary for specific recruitment to RKS1 and to trigger immunity. In terms of tissue distribution, strongly expressed in leaves, moderately in roots, and barely in flowers, mostly in pedicels.

The protein resides in the cell membrane. It is found in the nucleus. The enzyme catalyses L-seryl-[protein] + ATP = O-phospho-L-seryl-[protein] + ADP + H(+). It carries out the reaction L-threonyl-[protein] + ATP = O-phospho-L-threonyl-[protein] + ADP + H(+). Its function is as follows. Involved in disease resistance signaling. Contributes to pathogen-associated molecular pattern (PAMP)-triggered immunity (PTI) signaling and defense responses downstream of FLS2. Acts as a BIK1 decoy and enables Xanthomonas campestris AvrAC/XopAC detection; X.campestris effector AvrAC/XopAC-mediated uridylylation promotes the formation of a complex with RKS1 and RPP13L4/ZAR1 which, in turn, activates effector-triggered immunity (ETI) against X.campestris. Promotes, when uridylylated by AvrAC/XopAC, the release of ADP from the inactive RKS1-ZAR1 complex, thus activating the resistosome. The protein is Probable serine/threonine-protein kinase PBL2 of Arabidopsis thaliana (Mouse-ear cress).